Reading from the N-terminus, the 532-residue chain is Phosphoenolpyruvate carboxykinase (ATP) (532 aa).

The substrate site is built by Arg60, Tyr194, and Lys200. Residues Lys200, His219, and 237 to 245 (GLSGTGKTT) each bind ATP. Positions 200 and 219 each coordinate Mn(2+). Asp258 provides a ligand contact to Mn(2+). The ATP site is built by Glu286, Arg324, and Thr449. A substrate-binding site is contributed by Arg324.

It belongs to the phosphoenolpyruvate carboxykinase (ATP) family. Mn(2+) serves as cofactor.

It localises to the cytoplasm. It carries out the reaction oxaloacetate + ATP = phosphoenolpyruvate + ADP + CO2. The protein operates within carbohydrate biosynthesis; gluconeogenesis. In terms of biological role, involved in the gluconeogenesis. Catalyzes the conversion of oxaloacetate (OAA) to phosphoenolpyruvate (PEP) through direct phosphoryl transfer between the nucleoside triphosphate and OAA. This Roseobacter denitrificans (strain ATCC 33942 / OCh 114) (Erythrobacter sp. (strain OCh 114)) protein is Phosphoenolpyruvate carboxykinase (ATP).